A 500-amino-acid polypeptide reads, in one-letter code: Cytochrome P450 2D20 (500 aa).

Cysteine 446 lines the heme pocket.

The protein belongs to the cytochrome P450 family. Heme is required as a cofactor.

The protein resides in the endoplasmic reticulum membrane. The protein localises to the microsome membrane. This chain is Cytochrome P450 2D20 (CYP2D20), found in Mesocricetus auratus (Golden hamster).